A 335-amino-acid polypeptide reads, in one-letter code: Biotin synthase (335 aa).

A Radical SAM core domain is found at 46–274; it reads YDIQLASLFS…ESKIRLSAGR (229 aa). [4Fe-4S] cluster is bound by residues Cys-61, Cys-65, and Cys-68. [2Fe-2S] cluster contacts are provided by Cys-105, Cys-137, Cys-197, and Arg-269.

It belongs to the radical SAM superfamily. Biotin synthase family. In terms of assembly, homodimer. It depends on [4Fe-4S] cluster as a cofactor. [2Fe-2S] cluster is required as a cofactor.

It carries out the reaction (4R,5S)-dethiobiotin + (sulfur carrier)-SH + 2 reduced [2Fe-2S]-[ferredoxin] + 2 S-adenosyl-L-methionine = (sulfur carrier)-H + biotin + 2 5'-deoxyadenosine + 2 L-methionine + 2 oxidized [2Fe-2S]-[ferredoxin]. It participates in cofactor biosynthesis; biotin biosynthesis; biotin from 7,8-diaminononanoate: step 2/2. Its function is as follows. Catalyzes the conversion of dethiobiotin (DTB) to biotin by the insertion of a sulfur atom into dethiobiotin via a radical-based mechanism. In Prochlorococcus marinus (strain MIT 9301), this protein is Biotin synthase.